A 325-amino-acid chain; its full sequence is Fatty acid synthase alpha subunit hexA (325 aa).

Position 209 (Asp-209) interacts with Mg(2+). Residues 209–211, 255–265, 279–282, and 301–303 contribute to the acetyl-CoA site; these read DLV, EAVFKCLHTQT, KSDN, and ISH. Ser-302 contributes to the Mg(2+) binding site.

This sequence belongs to the thiolase-like superfamily. Fungal fatty acid synthetase subunit alpha family. As to quaternary structure, [Alpha(6)beta(6)] hexamers of two multifunctional subunits (alpha and beta). In terms of processing, 4'-phosphopantetheine is transferred from CoA to a specific serine of the acyl carrier domain by the C-terminal PPT domain. This modification is essential for activity because fatty acids are bound in thioester linkage to the sulfhydryl of the prosthetic group.

The catalysed reaction is acetyl-CoA + n malonyl-CoA + 2n NADPH + 4n H(+) = a long-chain-acyl-CoA + n CoA + n CO2 + 2n NADP(+).. It carries out the reaction a fatty acyl-[ACP] + malonyl-[ACP] + H(+) = a 3-oxoacyl-[ACP] + holo-[ACP] + CO2. It catalyses the reaction a (3R)-hydroxyacyl-[ACP] + NADP(+) = a 3-oxoacyl-[ACP] + NADPH + H(+). The protein operates within mycotoxin biosynthesis. Functionally, fatty acid synthase alpha subunit; part of the fragmented gene cluster that mediates the biosynthesis of dothistromin (DOTH), a polyketide toxin very similar in structure to the aflatoxin precursor, versicolorin B. The first step of the pathway is the conversion of acetate to norsolorinic acid (NOR) and requires the fatty acid synthase subunits hexA and hexB, as well as the polyketide synthase pksA. PksA combines a hexanoyl starter unit and 7 malonyl-CoA extender units to synthesize the precursor NOR. The hexanoyl starter unit is provided to the acyl-carrier protein (ACP) domain by the fungal fatty acid synthase hexA/hexB. The second step is the conversion of NOR to averantin (AVN) and requires the norsolorinic acid ketoreductase nor1, which catalyzes the dehydration of norsolorinic acid to form (1'S)-averantin. The cytochrome P450 monooxygenase avnA then catalyzes the hydroxylation of AVN to 5'hydroxyaverantin (HAVN). The next step is performed by adhA that transforms HAVN to averufin (AVF). Averufin might then be converted to hydroxyversicolorone by cypX and avfA. Hydroxyversicolorone is further converted versiconal hemiacetal acetate (VHA) by moxY. VHA is then the substrate for the versiconal hemiacetal acetate esterase est1 to yield versiconal (VAL). Versicolorin B synthase vbsA then converts VAL to versicolorin B (VERB) by closing the bisfuran ring. Then, the activity of the versicolorin B desaturase verB leads to versicolorin A (VERA). DotB, a predicted chloroperoxidase, may perform epoxidation of the A-ring of VERA. Alternatively, a cytochrome P450, such as cypX or avnA could catalyze this step. It is also possible that another, uncharacterized, cytochrome P450 enzyme is responsible for this step. Opening of the epoxide could potentially be achieved by the epoxide hydrolase epoA. However, epoA seems not to be required for DOTH biosynthesis, but other epoxide hydrolases may have the ability to complement this hydrolysis. Alternatively, opening of the epoxide ring could be achieved non-enzymatically. The next step is the deoxygenation of ring A to yield the 5,8-dihydroxyanthraquinone which is most likely catalyzed by the NADPH dehydrogenase encoded by ver1. The last stages of DOTH biosynthesis are proposed to involve hydroxylation of the bisfuran. OrdB and norB might have oxidative roles here. An alternative possibility is that cytochrome P450 monoogenases such as avnA and cypX might perform these steps in addition to previously proposed steps. This Dothistroma septosporum (Red band needle blight fungus) protein is Fatty acid synthase alpha subunit hexA.